Here is a 586-residue protein sequence, read N- to C-terminus: 2-succinyl-5-enolpyruvyl-6-hydroxy-3-cyclohexene-1-carboxylate synthase (586 aa).

This sequence belongs to the TPP enzyme family. MenD subfamily. In terms of assembly, homodimer. Mg(2+) is required as a cofactor. It depends on Mn(2+) as a cofactor. The cofactor is thiamine diphosphate.

The enzyme catalyses isochorismate + 2-oxoglutarate + H(+) = 5-enolpyruvoyl-6-hydroxy-2-succinyl-cyclohex-3-ene-1-carboxylate + CO2. The protein operates within quinol/quinone metabolism; 1,4-dihydroxy-2-naphthoate biosynthesis; 1,4-dihydroxy-2-naphthoate from chorismate: step 2/7. It participates in cofactor biosynthesis; phylloquinone biosynthesis. Functionally, catalyzes the thiamine diphosphate-dependent decarboxylation of 2-oxoglutarate and the subsequent addition of the resulting succinic semialdehyde-thiamine pyrophosphate anion to isochorismate to yield 2-succinyl-5-enolpyruvyl-6-hydroxy-3-cyclohexene-1-carboxylate (SEPHCHC). The sequence is that of 2-succinyl-5-enolpyruvyl-6-hydroxy-3-cyclohexene-1-carboxylate synthase from Acaryochloris marina (strain MBIC 11017).